The sequence spans 108 residues: Iron-sulfur cluster assembly protein CyaY (108 aa).

It belongs to the frataxin family.

Involved in iron-sulfur (Fe-S) cluster assembly. May act as a regulator of Fe-S biogenesis. The chain is Iron-sulfur cluster assembly protein CyaY from Burkholderia cenocepacia (strain ATCC BAA-245 / DSM 16553 / LMG 16656 / NCTC 13227 / J2315 / CF5610) (Burkholderia cepacia (strain J2315)).